Consider the following 185-residue polypeptide: Peptidyl-tRNA hydrolase (185 aa).

Tyr14 lines the tRNA pocket. His19 functions as the Proton acceptor in the catalytic mechanism. TRNA-binding residues include Phe64, Asn66, and Asn112.

The protein belongs to the PTH family. As to quaternary structure, monomer.

The protein localises to the cytoplasm. The enzyme catalyses an N-acyl-L-alpha-aminoacyl-tRNA + H2O = an N-acyl-L-amino acid + a tRNA + H(+). Hydrolyzes ribosome-free peptidyl-tRNAs (with 1 or more amino acids incorporated), which drop off the ribosome during protein synthesis, or as a result of ribosome stalling. In terms of biological role, catalyzes the release of premature peptidyl moieties from peptidyl-tRNA molecules trapped in stalled 50S ribosomal subunits, and thus maintains levels of free tRNAs and 50S ribosomes. The sequence is that of Peptidyl-tRNA hydrolase from Caldanaerobacter subterraneus subsp. tengcongensis (strain DSM 15242 / JCM 11007 / NBRC 100824 / MB4) (Thermoanaerobacter tengcongensis).